Reading from the N-terminus, the 213-residue chain is Protein ras-1 (213 aa).

G15–S22 contributes to the GTP binding site. The short motif at Y37–Y45 is the Effector region element. GTP-binding positions include D62 to Q66 and N121 to D124. Position 210 is a cysteine methyl ester (C210). C210 is lipidated: S-farnesyl cysteine. Residues I211 to M213 constitute a propeptide, removed in mature form.

Belongs to the small GTPase superfamily. Ras family.

Its subcellular location is the cell membrane. It carries out the reaction GTP + H2O = GDP + phosphate + H(+). In terms of biological role, ras proteins bind GDP/GTP and possess intrinsic GTPase activity. The polypeptide is Protein ras-1 (ras-1) (Neurospora crassa (strain ATCC 24698 / 74-OR23-1A / CBS 708.71 / DSM 1257 / FGSC 987)).